Reading from the N-terminus, the 411-residue chain is MFRITDFTYEGKTVFLRADLNSPVEKGRITSDARFRAVLPTIQHLLDNGAKLVIATHQSRPYKGDYITTEEHAQILSRLLGQEVEYVEDIFGKYARERISSLKPGEAIILENLRFSAEEVFNRSIEECEKTFFVRKLAPLIDYVVNDAFATAHRSQPSLVGFARLKPMIMGKLMETEVDALSKAYESEERPRVYVLGGAKVDDSLRVAENVLRKGKADLILTGGLVGQIFTLAKGFDLGDANIEFLHRKGLLELVDWAEKILDEFYPYVRTPVDFAIDYKGERLEVDLLGGEKRLFDQYPILDIGSRTVEKYREILIGAKIIVANGPMGVFEREEFAVGTVGVFRAIGESPAFSVVGGGHSIASIYRYNITGISHISTGGGAMLSFFAGEELPVLKALKISYERFKDRVKE.

Substrate contacts are provided by residues 19–21, Arg-34, 57–60, Arg-114, and Arg-154; these read DLN and HQSR. Residues Glu-332 and 358 to 361 each bind ATP; that span reads GGHS.

The protein belongs to the phosphoglycerate kinase family. In terms of assembly, monomer.

The protein resides in the cytoplasm. The enzyme catalyses (2R)-3-phosphoglycerate + ATP = (2R)-3-phospho-glyceroyl phosphate + ADP. Its pathway is carbohydrate degradation; glycolysis; pyruvate from D-glyceraldehyde 3-phosphate: step 2/5. The protein is Phosphoglycerate kinase of Thermococcus kodakarensis (strain ATCC BAA-918 / JCM 12380 / KOD1) (Pyrococcus kodakaraensis (strain KOD1)).